The sequence spans 673 residues: Synaptotagmin-like protein 4 (673 aa).

The RabBD domain occupies 4-122 (ILDLSFLSEM…KATGDWFYDQ (119 aa)). The FYVE-type zinc-finger motif lies at 63–105 (CARCQEGLGRLIPKSSTCVGCNHLVCRECRVLESNGSWRCKVC). A disordered region spans residues 184–253 (FEVPKTRSGK…PGNQNAVCGD (70 aa)). Phosphoserine occurs at positions 202, 205, 218, 222, and 275. The C2 1 domain occupies 358–480 (VTGKIAFSLK…KLDKKLDHCL (123 aa)). Ser-490 is subject to Phosphoserine. In terms of domain architecture, C2 2 spans 509 to 635 (PASKLPVGGD…ISNGEVVDWM (127 aa)).

In terms of assembly, part of a ternary complex containing STX1A and RAB27A. Can bind both dominant negative and dominant active mutants of RAB27A. Binds STXBP1, RAB3A, RAB8A and RAB27B. Interacts with MYO5A. In terms of tissue distribution, detected in the pancreatic islet, in particular in insulin-positive beta cells, and in pituitary.

It localises to the membrane. Its subcellular location is the cytoplasmic vesicle. The protein resides in the secretory vesicle membrane. Modulates exocytosis of dense-core granules and secretion of hormones in the pancreas and the pituitary. Interacts with vesicles containing negatively charged phospholipids in a Ca(2+)-independent manner. The protein is Synaptotagmin-like protein 4 (Sytl4) of Mus musculus (Mouse).